Consider the following 105-residue polypeptide: Fungal protease inhibitor-1 (105 aa).

A signal peptide spans 1 to 19; it reads MKAVITLLFLACILVVTYG. 6 disulfides stabilise this stretch: Cys-23–Cys-56, Cys-28–Cys-58, Cys-33–Cys-59, Cys-42–Cys-62, Cys-72–Cys-93, and Cys-87–Cys-98.

Its function is as follows. Inhibits proteases from the fungi A.oryzae and R.oryzae, trypsin and chymotrypsin. Does not inhibit protease from the bacterium B.licheniformis or papain. The chain is Fungal protease inhibitor-1 from Antheraea mylitta (Tasar silkworm).